We begin with the raw amino-acid sequence, 214 residues long: Ribonuclease HII (214 aa).

Residues 26–214 (EIVCGVDEAG…PVREAFDLIR (189 aa)) enclose the RNase H type-2 domain. A divalent metal cation contacts are provided by Asp-32, Glu-33, and Asp-124.

This sequence belongs to the RNase HII family. Mn(2+) is required as a cofactor. It depends on Mg(2+) as a cofactor.

It localises to the cytoplasm. The catalysed reaction is Endonucleolytic cleavage to 5'-phosphomonoester.. Endonuclease that specifically degrades the RNA of RNA-DNA hybrids. The chain is Ribonuclease HII from Burkholderia pseudomallei (strain 1710b).